Here is a 316-residue protein sequence, read N- to C-terminus: ATP synthase gamma chain (316 aa).

This sequence belongs to the ATPase gamma chain family. As to quaternary structure, F-type ATPases have 2 components, CF(1) - the catalytic core - and CF(0) - the membrane proton channel. CF(1) has five subunits: alpha(3), beta(3), gamma(1), delta(1), epsilon(1). CF(0) has three main subunits: a, b and c.

It is found in the cellular thylakoid membrane. Its function is as follows. Produces ATP from ADP in the presence of a proton gradient across the membrane. The gamma chain is believed to be important in regulating ATPase activity and the flow of protons through the CF(0) complex. The polypeptide is ATP synthase gamma chain (Prochlorococcus marinus (strain MIT 9313)).